Here is a 1762-residue protein sequence, read N- to C-terminus: ADAMTS-like protein 1 (1762 aa).

A signal peptide spans M1–S28. One can recognise a TSP type-1 1 domain in the interval D33–P82. C-linked (Man) tryptophan glycosylation is found at W39 and W42. Intrachain disulfides connect C45–C76, C49–C81, and C60–C66. T48 is a glycosylation site (O-linked (Fuc...) threonine). N251 is a glycosylation site (N-linked (GlcNAc...) asparagine). An O-linked (Fuc...) threonine glycan is attached at T312. TSP type-1 domains are found at residues P376–P424, D436–Y493, E522–S584, E607–P665, C666–P729, and C788–A850. A glycan (O-linked (Fuc...) serine) is linked at S391. O-linked (Fuc...) threonine glycosylation occurs at T451. Intrachain disulfides connect C534/C578, C538/C583, and C549/C567. 7 cysteine pairs are disulfide-bonded: C678-C723, C682-C728, C693-C712, C800-C844, C804-C849, C815-C832, and C899-C947. Positions P861 to G963 constitute an Ig-like C2-type 1 domain. The segment at L1120–P1164 is disordered. The segment covering S1139–G1151 has biased composition (low complexity). Ig-like C2-type domains follow at residues P1164–T1266, P1286–L1369, and P1395–V1485. 3 disulfide bridges follow: C1202–C1250, C1308–C1353, and C1418–C1469. 2 TSP type-1 domains span residues C1545–V1608 and C1666–E1726. Residues E1726–A1762 form the PLAC domain.

In terms of assembly, monomer. C-, N- and O-glycosylated. O-fucosylated by POFUT2 on a serine or a threonine residue found within the consensus sequence C1-X(2)-(S/T)-C2-G of the TSP type-1 repeat domains where C1 and C2 are the first and second cysteine residue of the repeat, respectively. Fucosylated repeats can then be further glycosylated by the addition of a beta-1,3-glucose residue by the glucosyltransferase, B3GALTL. Fucosylation mediates the efficient secretion of ADAMTSL1. Can also be C-glycosylated with one or two mannose molecules on tryptophan residues within the consensus sequence W-X-X-W of the TPRs, and N-glycosylated. These other glycosylations can also facilitate secretion. Post-translationally, disulfide bonds are present. As to expression, expressed primarily in adult skeletal muscle.

It localises to the secreted. The protein localises to the extracellular space. The protein resides in the extracellular matrix. The polypeptide is ADAMTS-like protein 1 (ADAMTSL1) (Homo sapiens (Human)).